We begin with the raw amino-acid sequence, 587 residues long: Mitochondrial ribonuclease P catalytic subunit (587 aa).

A mitochondrion-targeting transit peptide spans 1–46 (MTFYLSGFRSFLKLWKSNPYFELGPATSSASFFLGVHCVIGNQQRW). A disordered region spans residues 94–114 (KRSHLSGNPQNQGHTLPVKST). Positions 98 to 114 (LSGNPQNQGHTLPVKST) are enriched in polar residues. Residues 342–578 (IQKSGQCSSC…SCEVPTKWLC (237 aa)) form the PRORP domain. Zn(2+)-binding residues include Cys348 and Cys351. Mg(2+) contacts are provided by Asp409, Asp478, Asp479, and Asp499. Zn(2+) contacts are provided by His557 and Cys578.

The protein belongs to the PPR family. P subfamily. Catalytic component of mitochondrial ribonuclease P, a complex composed of TRMT10C/MRPP1, HSD17B10/MRPP2 and PRORP/MRPP3. Mg(2+) serves as cofactor. The cofactor is Mn(2+). Degraded by LONP1 following mitochondrial unfolded protein response, probably leading to inhibit translation in mitochondrion.

The protein localises to the mitochondrion. The enzyme catalyses Endonucleolytic cleavage of RNA, removing 5'-extranucleotides from tRNA precursor.. Catalytic ribonuclease component of mitochondrial ribonuclease P, a complex composed of TRMT10C/MRPP1, HSD17B10/MRPP2 and PRORP/MRPP3, which cleaves tRNA molecules in their 5'-ends. The presence of TRMT10C/MRPP1, HSD17B10/MRPP2 is required to catalyze tRNA molecules in their 5'-ends. The chain is Mitochondrial ribonuclease P catalytic subunit (Prorp) from Rattus norvegicus (Rat).